A 246-amino-acid chain; its full sequence is MAVRAQFENSNEVGVFATLTNSYALTAIGASENFYSVFEAELQDVIPICRTTIAGSRIIGRMTAGNRKGLLVPTNTTDQELQHLRNSLPDAIRIQRIEERLSALGNVIVTNDHIALVHPDIERETEEIIADVLGVEVFRQTIADNVLVGSYMSLSNQGGLVHPKTSIQDQDELSSLLQVPLVAGSVNRGSNVVGAGMVVNDWMAVTGLDTTATELSVIESVFRLGEGLGPSNINTGMKDTMVESFY.

2 positions are modified to phosphoserine; by CK1: serine 174 and serine 175.

It belongs to the eIF-6 family. As to quaternary structure, monomer. Associates with the 60S ribosomal subunit. In terms of processing, phosphorylation at Ser-174 and Ser-175 promotes nuclear export.

The protein localises to the cytoplasm. The protein resides in the nucleus. Its subcellular location is the nucleolus. Binds to the 60S ribosomal subunit and prevents its association with the 40S ribosomal subunit to form the 80S initiation complex in the cytoplasm. Is also involved in ribosome biogenesis. Associates with pre-60S subunits in the nucleus and is involved in its nuclear export. The polypeptide is Eukaryotic translation initiation factor 6 (Verticillium alfalfae (strain VaMs.102 / ATCC MYA-4576 / FGSC 10136) (Verticillium wilt of alfalfa)).